The sequence spans 352 residues: Phosphoribosylformylglycinamidine cyclo-ligase (352 aa).

Belongs to the AIR synthase family.

It localises to the cytoplasm. It catalyses the reaction 2-formamido-N(1)-(5-O-phospho-beta-D-ribosyl)acetamidine + ATP = 5-amino-1-(5-phospho-beta-D-ribosyl)imidazole + ADP + phosphate + H(+). It functions in the pathway purine metabolism; IMP biosynthesis via de novo pathway; 5-amino-1-(5-phospho-D-ribosyl)imidazole from N(2)-formyl-N(1)-(5-phospho-D-ribosyl)glycinamide: step 2/2. This is Phosphoribosylformylglycinamidine cyclo-ligase from Pseudomonas putida (strain W619).